The following is a 66-amino-acid chain: Large ribosomal subunit protein bL28 (66 aa).

The disordered stretch occupies residues 1–26; it reads MAKDAITGARTRFGNQRSHALNSSRR. A compositionally biased stretch (polar residues) spans 13–25; sequence FGNQRSHALNSSR.

Belongs to the bacterial ribosomal protein bL28 family.

In Leuconostoc mesenteroides subsp. mesenteroides (strain ATCC 8293 / DSM 20343 / BCRC 11652 / CCM 1803 / JCM 6124 / NCDO 523 / NBRC 100496 / NCIMB 8023 / NCTC 12954 / NRRL B-1118 / 37Y), this protein is Large ribosomal subunit protein bL28.